We begin with the raw amino-acid sequence, 688 residues long: Potassium-transporting ATPase ATP-binding subunit (688 aa).

4 helical membrane passes run 34–54, 62–82, 219–239, and 260–280; these read PVMF…LAIL, AMFT…ANMA, VALT…TATL, and VLVA…LSAI. Asp-313 acts as the 4-aspartylphosphate intermediate in catalysis. ATP is bound by residues Asp-350, Glu-354, 383 to 390, and Lys-401; that span reads FSAQTRMS. Asp-524 and Asp-528 together coordinate Mg(2+). 3 helical membrane-spanning segments follow: residues 594-614, 622-642, and 662-682; these read FAII…LNIM, AILS…PLAL, and IYGL…DLLL.

Belongs to the cation transport ATPase (P-type) (TC 3.A.3) family. Type IA subfamily. As to quaternary structure, the system is composed of three essential subunits: KdpA, KdpB and KdpC.

It is found in the cell inner membrane. The enzyme catalyses K(+)(out) + ATP + H2O = K(+)(in) + ADP + phosphate + H(+). In terms of biological role, part of the high-affinity ATP-driven potassium transport (or Kdp) system, which catalyzes the hydrolysis of ATP coupled with the electrogenic transport of potassium into the cytoplasm. This subunit is responsible for energy coupling to the transport system and for the release of the potassium ions to the cytoplasm. The protein is Potassium-transporting ATPase ATP-binding subunit of Yersinia pseudotuberculosis serotype I (strain IP32953).